The following is a 140-amino-acid chain: L-fucose mutarotase (140 aa).

The active-site Proton donor is histidine 22. Residues aspartate 30, arginine 107, and 129–131 contribute to the substrate site; that span reads YGN.

Belongs to the RbsD / FucU family. FucU mutarotase subfamily. Homodecamer.

Its subcellular location is the cytoplasm. The enzyme catalyses alpha-L-fucose = beta-L-fucose. Its pathway is carbohydrate metabolism; L-fucose metabolism. Its function is as follows. Involved in the anomeric conversion of L-fucose. This chain is L-fucose mutarotase, found in Klebsiella pneumoniae (strain 342).